A 152-amino-acid chain; its full sequence is HTH-type transcriptional regulator SlrR (152 aa).

One can recognise an HTH cro/C1-type domain in the interval 6 to 61 (IRLYRKRKGYSINQLAVESGVSKSYLSKIERGVHTNPSVQFLKKVSATLEVELTEL). The H-T-H motif DNA-binding region spans 17–36 (INQLAVESGVSKSYLSKIER). Residues 113-151 (YRNRKLTESNIEEWKALMAEAREIGLSVHEVKSFLKTKG) enclose the Sin domain.

Component of the SlrR/SlrA complex.

Represses sigma(D)-dependent flagellar genes and activate the eps and yqxM operons. Repressor activity is regulated by SlrA. Controls the initiation of biofilm formation. The protein is HTH-type transcriptional regulator SlrR (slrR) of Bacillus subtilis (strain 168).